Consider the following 308-residue polypeptide: N-acetyl-gamma-glutamyl-phosphate reductase (308 aa).

Cysteine 116 is an active-site residue.

This sequence belongs to the NAGSA dehydrogenase family. Type 2 subfamily.

The protein resides in the cytoplasm. The enzyme catalyses N-acetyl-L-glutamate 5-semialdehyde + phosphate + NADP(+) = N-acetyl-L-glutamyl 5-phosphate + NADPH + H(+). Its pathway is amino-acid biosynthesis; L-arginine biosynthesis; N(2)-acetyl-L-ornithine from L-glutamate: step 3/4. Catalyzes the NADPH-dependent reduction of N-acetyl-5-glutamyl phosphate to yield N-acetyl-L-glutamate 5-semialdehyde. This Mesorhizobium japonicum (strain LMG 29417 / CECT 9101 / MAFF 303099) (Mesorhizobium loti (strain MAFF 303099)) protein is N-acetyl-gamma-glutamyl-phosphate reductase.